We begin with the raw amino-acid sequence, 493 residues long: MGETAAANNHRHHHHHGHQVFDVASHDFVPPQPAFKCFDDDGRLKRTGTVWTASAHIITAVIGSGVLSLAWAIAQLGWIAGPAVMLLFSLVTLYSSTLLSDCYRTGDAVSGKRNYTYMDAVRSILGGFKFKICGLIQYLNLFGIAIGYTIAASISMMAIKRSNCFHKSGGKDPCHMSSNPYMIVFGVAEILLSQVPDFDQIWWISIVAAVMSFTYSAIGLALGIVQVAANGVFKGSLTGISIGTVTQTQKIWRTFQALGDIAFAYSYSVVLIEIQDTVRSPPAESKTMKKATKISIAVTTIFYMLCGSMGYAAFGDAAPGNLLTGFGFYNPFWLLDIANAAIVVHLVGAYQVFAQPIFAFIEKSVAERYPDNDFLSKEFEIRIPGFKSPYKVNVFRMVYRSGFVVTTTVISMLMPFFNDVVGILGALGFWPLTVYFPVEMYIKQRKVEKWSTRWVCLQMLSVACLVISVVAGVGSIAGVMLDLKVYKPFKSTY.

At 1-49 the chain is on the cytoplasmic side; that stretch reads MGETAAANNHRHHHHHGHQVFDVASHDFVPPQPAFKCFDDDGRLKRTGT. 2 helical membrane passes run 50–70 and 71–91; these read VWTA…LSLA and WAIA…FSLV. Residues 92 to 138 lie on the Cytoplasmic side of the membrane; sequence TLYSSTLLSDCYRTGDAVSGKRNYTYMDAVRSILGGFKFKICGLIQY. The chain crosses the membrane as a helical span at residues 139-159; that stretch reads LNLFGIAIGYTIAASISMMAI. The Extracellular segment spans residues 160–175; the sequence is KRSNCFHKSGGKDPCH. The helical transmembrane segment at 176–196 threads the bilayer; it reads MSSNPYMIVFGVAEILLSQVP. Residues 197 to 200 are Cytoplasmic-facing; it reads DFDQ. Residues 201 to 221 traverse the membrane as a helical segment; that stretch reads IWWISIVAAVMSFTYSAIGLA. Residues 222–253 lie on the Extracellular side of the membrane; that stretch reads LGIVQVAANGVFKGSLTGISIGTVTQTQKIWR. Residues 254–274 form a helical membrane-spanning segment; sequence TFQALGDIAFAYSYSVVLIEI. The Cytoplasmic portion of the chain corresponds to 275–293; sequence QDTVRSPPAESKTMKKATK. The chain crosses the membrane as a helical span at residues 294–314; sequence ISIAVTTIFYMLCGSMGYAAF. At 315–340 the chain is on the extracellular side; sequence GDAAPGNLLTGFGFYNPFWLLDIANA. Residues 341–361 form a helical membrane-spanning segment; the sequence is AIVVHLVGAYQVFAQPIFAFI. Topologically, residues 362-396 are cytoplasmic; it reads EKSVAERYPDNDFLSKEFEIRIPGFKSPYKVNVFR. The helical transmembrane segment at 397-417 threads the bilayer; it reads MVYRSGFVVTTTVISMLMPFF. The Extracellular segment spans residues 418–419; sequence ND. The chain crosses the membrane as a helical span at residues 420–440; that stretch reads VVGILGALGFWPLTVYFPVEM. Residues 441–458 are Cytoplasmic-facing; it reads YIKQRKVEKWSTRWVCLQ. A helical membrane pass occupies residues 459 to 479; the sequence is MLSVACLVISVVAGVGSIAGV. At 480–493 the chain is on the extracellular side; the sequence is MLDLKVYKPFKSTY.

It belongs to the amino acid/polyamine transporter 2 family. Amino acid/auxin permease (AAAP) (TC 2.A.18.2) subfamily. Highly expressed in developing pods. Found in the vascular strands of siliques, cotyledons, leaves and roots, in the inner phloem of stems, and in the funiculi. Lower levels of expression in flowers. Not expressed in seeds.

It localises to the cell membrane. With respect to regulation, inhibited by diethylpyrocarbonate (DEPC). Functionally, amino acid-proton symporter. Stereospecific transporter with a broad specificity for histidine, arginine, glutamate and neutral amino acids, favoring small amino acids such as alanine, asparagine and glutamine. Also accepts large aromatic residues such as phenlalanine or tyrosine. Has a much higher affinity for basic amino acids as compared with AAP1. May function in xylem-to-phloem transfer and in uptake of amino acids assimilated in the green silique tissue. In Arabidopsis thaliana (Mouse-ear cress), this protein is Amino acid permease 2 (AAP2).